A 201-amino-acid chain; its full sequence is MPQAVAGPEIERLIQLLGRMPGLGPRSARRAALQLIKKRETLLAPLADAMRVAAERIVVCRSCGNVDTSDPCTICRDETRDPTTLVVVEDVSDLWALERSGAVKARYHVLGGVLSALDGVRPEHLTIARLVERAGEPGVKEIILALNATVDGQTTAHYVTESIKPFGLTVTRLAHGVPVGGELDYLDEGTLTAAIRSRTAF.

The C4-type zinc finger occupies 60–75 (CRSCGNVDTSDPCTIC). Residues 83–178 (TTLVVVEDVS…TVTRLAHGVP (96 aa)) form the Toprim domain.

It belongs to the RecR family.

Its function is as follows. May play a role in DNA repair. It seems to be involved in an RecBC-independent recombinational process of DNA repair. It may act with RecF and RecO. The chain is Recombination protein RecR from Methylorubrum extorquens (strain CM4 / NCIMB 13688) (Methylobacterium extorquens).